We begin with the raw amino-acid sequence, 161 residues long: MKLSEISDNPGARKKRMRIGRGIGSGKGKTGGRGGKGQTARSGVRIKGFEGGQMPLHRRLPKRGFNNIFRLEFSEINLDRLQDAIDAKTIDASAVINAESLVAAGVLRRSRDGVRLLGRGELKSKLTIEVHGATKSAIEAVEKAGGSVKILAPKEDKGEAA.

The interval Met1–Gly43 is disordered. Over residues Arg21–Gly37 the composition is skewed to gly residues.

It belongs to the universal ribosomal protein uL15 family. As to quaternary structure, part of the 50S ribosomal subunit.

Its function is as follows. Binds to the 23S rRNA. This chain is Large ribosomal subunit protein uL15, found in Rhodopseudomonas palustris (strain BisB5).